A 152-amino-acid chain; its full sequence is uncharacterized protein (152 aa).

The 127-residue stretch at proline 7–proline 133 folds into the VOC domain.

This is an uncharacterized protein from Mycobacterium bovis (strain ATCC BAA-935 / AF2122/97).